Here is a 177-residue protein sequence, read N- to C-terminus: Dual-action ribosomal maturation protein DarP (177 aa).

Belongs to the DarP family.

The protein resides in the cytoplasm. In terms of biological role, member of a network of 50S ribosomal subunit biogenesis factors which assembles along the 30S-50S interface, preventing incorrect 23S rRNA structures from forming. Promotes peptidyl transferase center (PTC) maturation. The polypeptide is Dual-action ribosomal maturation protein DarP (Glaesserella parasuis serovar 5 (strain SH0165) (Haemophilus parasuis)).